The following is a 434-amino-acid chain: Enolase (434 aa).

Residue Q167 participates in (2R)-2-phosphoglycerate binding. E209 functions as the Proton donor in the catalytic mechanism. 3 residues coordinate Mg(2+): D246, E291, and D318. (2R)-2-phosphoglycerate is bound by residues K343, R372, S373, and K394. K343 serves as the catalytic Proton acceptor.

It belongs to the enolase family. Component of the RNA degradosome, a multiprotein complex involved in RNA processing and mRNA degradation. It depends on Mg(2+) as a cofactor.

It is found in the cytoplasm. Its subcellular location is the secreted. The protein resides in the cell surface. It carries out the reaction (2R)-2-phosphoglycerate = phosphoenolpyruvate + H2O. It functions in the pathway carbohydrate degradation; glycolysis; pyruvate from D-glyceraldehyde 3-phosphate: step 4/5. In terms of biological role, catalyzes the reversible conversion of 2-phosphoglycerate (2-PG) into phosphoenolpyruvate (PEP). It is essential for the degradation of carbohydrates via glycolysis. The chain is Enolase from Buchnera aphidicola subsp. Schizaphis graminum (strain Sg).